The sequence spans 272 residues: Phosphoribosylformylglycinamidine synthase subunit PurQ (272 aa).

The Glutamine amidotransferase type-1 domain maps to 8–272 (VLVMSGYGIN…FKNAVEYFNK (265 aa)). Catalysis depends on Cys98, which acts as the Nucleophile. Residues His225, Glu227, and Glu235 contribute to the active site.

As to quaternary structure, part of the FGAM synthase complex composed of 1 PurL, 1 PurQ and 2 PurS subunits.

It localises to the cytoplasm. It carries out the reaction N(2)-formyl-N(1)-(5-phospho-beta-D-ribosyl)glycinamide + L-glutamine + ATP + H2O = 2-formamido-N(1)-(5-O-phospho-beta-D-ribosyl)acetamidine + L-glutamate + ADP + phosphate + H(+). It catalyses the reaction L-glutamine + H2O = L-glutamate + NH4(+). It participates in purine metabolism; IMP biosynthesis via de novo pathway; 5-amino-1-(5-phospho-D-ribosyl)imidazole from N(2)-formyl-N(1)-(5-phospho-D-ribosyl)glycinamide: step 1/2. Part of the phosphoribosylformylglycinamidine synthase complex involved in the purines biosynthetic pathway. Catalyzes the ATP-dependent conversion of formylglycinamide ribonucleotide (FGAR) and glutamine to yield formylglycinamidine ribonucleotide (FGAM) and glutamate. The FGAM synthase complex is composed of three subunits. PurQ produces an ammonia molecule by converting glutamine to glutamate. PurL transfers the ammonia molecule to FGAR to form FGAM in an ATP-dependent manner. PurS interacts with PurQ and PurL and is thought to assist in the transfer of the ammonia molecule from PurQ to PurL. The sequence is that of Phosphoribosylformylglycinamidine synthase subunit PurQ from Methanococcus maripaludis (strain DSM 14266 / JCM 13030 / NBRC 101832 / S2 / LL).